The following is a 499-amino-acid chain: Proline--tRNA ligase (499 aa).

It belongs to the class-II aminoacyl-tRNA synthetase family. ProS type 3 subfamily. Homodimer.

Its subcellular location is the cytoplasm. The catalysed reaction is tRNA(Pro) + L-proline + ATP = L-prolyl-tRNA(Pro) + AMP + diphosphate. In terms of biological role, catalyzes the attachment of proline to tRNA(Pro) in a two-step reaction: proline is first activated by ATP to form Pro-AMP and then transferred to the acceptor end of tRNA(Pro). This Bdellovibrio bacteriovorus (strain ATCC 15356 / DSM 50701 / NCIMB 9529 / HD100) protein is Proline--tRNA ligase.